The following is a 947-amino-acid chain: Protocadherin alpha-4 (947 aa).

Residues 1–29 (MEFSWGSGQESQRLLLSFLLLAIWEAGNS) form the signal peptide. Cadherin domains lie at 30 to 133 (QIHY…PPRF), 134 to 242 (PTTQ…APVF), 243 to 350 (DRSL…VPEL), 351 to 455 (EFKS…APVF), 456 to 565 (AQPE…APTL), and 573 to 681 (SGGI…APSR). Topologically, residues 30-697 (QIHYSIPEEA…HSEASLVDVN (668 aa)) are extracellular. Residues cysteine 96 and cysteine 102 are joined by a disulfide bond. 2 N-linked (GlcNAc...) asparagine glycosylation sites follow: asparagine 257 and asparagine 265. The O-linked (Man) threonine glycan is linked to threonine 438. Serine 440 and serine 442 each carry an O-linked (Man) serine glycan. Residue asparagine 548 is glycosylated (N-linked (GlcNAc...) asparagine). Residues 698-718 (VYLIIAICAVSSLLVLTLLLY) form a helical membrane-spanning segment. The Cytoplasmic portion of the chain corresponds to 719–947 (TALRCSTVPS…GNSTTDNSDQ (229 aa)). PXXP repeat units follow at residues 734 to 737 (PPKP), 774 to 777 (PSLS), 796 to 799 (PRQP), 829 to 832 (PGGP), 870 to 873 (PGNP), and 888 to 891 (PGSP). Residues 734-891 (PPKPVMVCSS…PDKFIIPGSP (158 aa)) are 6 X 4 AA repeats of P-X-X-P. The interval 738–947 (VMVCSSAVGS…GNSTTDNSDQ (210 aa)) is required for interaction with FYN. 2 disordered regions span residues 761–805 (GEYP…DWRY) and 824–853 (ILRA…EVSP). Positions 891 to 947 (PAIISIRQEPANNQIDKSDFITFGKKEETKKKKKKKKGNKTQEKKEKGNSTTDNSDQ) are disordered. Basic and acidic residues predominate over residues 906–920 (DKSDFITFGKKEETK).

As to quaternary structure, forms homodimers in trans (molecules expressed by two different cells). Forms promiscuous heterodimers in cis (at the plasma membrane of the same cell) with other protocadherins. Interacts with FYN. In terms of tissue distribution, detected in brain throughout embryonic development. Detected in adult brain, in particular in cerebellum and forebrain.

The protein resides in the cell membrane. Calcium-dependent cell-adhesion protein involved in cells self-recognition and non-self discrimination. Thereby, it is involved in the establishment and maintenance of specific neuronal connections in the brain. This Mus musculus (Mouse) protein is Protocadherin alpha-4.